Here is a 429-residue protein sequence, read N- to C-terminus: D-galactonate dehydratase family member Caci_4410 (429 aa).

Residues 1–22 (MTDANHLLDPSGALPQTRPPWT) form a disordered region. Asp233 contacts Mg(2+). His235 provides a ligand contact to D-arabinonate. Mg(2+) is bound by residues Glu259 and Glu285. Residues Glu285, Arg306, His335, and Glu362 each contribute to the D-arabinonate site.

Belongs to the mandelate racemase/muconate lactonizing enzyme family. GalD subfamily.

Functionally, has no detectable activity with D-mannonate and with a panel of 70 other acid sugars (in vitro), in spite of the conservation of the residues that are expected to be important for catalytic activity and cofactor binding. May have evolved a divergent function. The protein is D-galactonate dehydratase family member Caci_4410 of Catenulispora acidiphila (strain DSM 44928 / JCM 14897 / NBRC 102108 / NRRL B-24433 / ID139908).